The following is a 394-amino-acid chain: Protein-glutamate methylesterase/protein-glutamine glutaminase (394 aa).

The tract at residues 1 to 24 (MSDGFGRPPPPAPAGHPTGAAGGD) is disordered. Residues 15 to 24 (GHPTGAAGGD) show a composition bias toward low complexity. Residues 27–145 (RVMVVDDSAV…EIGGADAFKR (119 aa)) enclose the Response regulatory domain. Asp78 bears the 4-aspartylphosphate mark. Positions 191-393 (PAPAVGSVGQ…PYIRKFASRA (203 aa)) constitute a CheB-type methylesterase domain. Active-site residues include Ser211, His238, and Asp335.

The protein belongs to the CheB family. Phosphorylated by CheA. Phosphorylation of the N-terminal regulatory domain activates the methylesterase activity.

It is found in the cytoplasm. It carries out the reaction [protein]-L-glutamate 5-O-methyl ester + H2O = L-glutamyl-[protein] + methanol + H(+). The catalysed reaction is L-glutaminyl-[protein] + H2O = L-glutamyl-[protein] + NH4(+). Functionally, involved in chemotaxis. Part of a chemotaxis signal transduction system that modulates chemotaxis in response to various stimuli. Catalyzes the demethylation of specific methylglutamate residues introduced into the chemoreceptors (methyl-accepting chemotaxis proteins or MCP) by CheR. Also mediates the irreversible deamidation of specific glutamine residues to glutamic acid. In Azospirillum brasilense, this protein is Protein-glutamate methylesterase/protein-glutamine glutaminase.